Reading from the N-terminus, the 1379-residue chain is ATPase histone chaperone YTA7 (1379 aa).

2 disordered regions span residues 1–39 (MARN…TTTR) and 54–243 (DFLE…NSRN). The residue at position 2 (A2) is an N-acetylalanine. A phosphoserine mark is found at S11 and S17. Positions 61 to 78 (VMDKDETPVDVTSDEHHN) are enriched in basic and acidic residues. The residue at position 94 (S94) is a Phosphoserine. Positions 97-110 (ENARTNEELTNERN) are enriched in basic and acidic residues. 2 stretches are compositionally biased toward acidic residues: residues 119 to 152 (PEED…DEDS) and 170 to 184 (DPDD…DEEG). The segment covering 192–207 (SSKRLKRANSRRTRSS) has biased composition (basic residues). Residue T212 is modified to Phosphothreonine. Over residues 218-228 (RALRSRTRHSR) the composition is skewed to basic residues. T229 is subject to Phosphothreonine. Phosphoserine is present on residues S241, S259, and S285. A disordered region spans residues 302 to 330 (NPSPARRGRGGWNASQNSGPTRRLFPTGG). A phosphoserine mark is found at S367, S369, and S370. The segment at 375–396 (LPLGVTPKTKKENTQKKKKKKP) is disordered. The interval 450–578 (VLFHGPPGTG…PALRRPGRFD (129 aa)) is AAA-ATPase; required for its chromatin boundary function. 454 to 461 (GPPGTGKT) is a binding site for ATP. At S735 the chain carries Phosphoserine. Residues 974–1101 (RLKNVLKIKL…ANAQMGIEEI (128 aa)) form the Bromo domain. S1142 is modified (phosphoserine). Disordered stretches follow at residues 1233 to 1274 (TCTS…ANTN) and 1291 to 1316 (LHET…GKKS). The segment covering 1244 to 1254 (ERARKEPKENE) has biased composition (basic and acidic residues). S1256 is subject to Phosphoserine. Residues 1256 to 1274 (SLQTQVTEENFSKIDANTN) show a composition bias toward polar residues. The segment covering 1293–1316 (ETVEKRERSPIPKEVVEPEQGKKS) has biased composition (basic and acidic residues).

Belongs to the AAA ATPase family. Interacts with CSE4/CENP-A. Interacts with SCM3. Interacts with SPT16. Interacts with POB3. Interacts with the casein kinase II complex subunits CKA1, CKA2, CKB1 and CKB2. Interacts with RNA polymerase II. Interacts (via Bromo domain) with histone H3. Interacts (via Bromo domain) with histone H4. Post-translationally, phosphorylated by CDK1 and casein kinase II during S-phase, which leads to its eviction from histone gene promoters and promotes histone gene transcription.

It is found in the chromosome. The protein resides in the centromere. The protein localises to the nucleus. Its function is as follows. Functions as an ATP-dependent nucleosome disassembly factor that helps evict canonical histone H3 from the 5'-end of genes upon their induction. Also contributes to kinetochore assembly by cooperating with SCM3 to load the histone H3 variant CSE4/CENP-A at centromeres. Provides a chromatin boundary function at the 5'-end of genes that restricts access by RTT106 and thus prevents ectopic spreading of repressive chromatin into coding regions. Also prevents heterochromatin spreading downstream of the silent mating-type locus HMR, this function is independent of the tRNA boundary element. Contributes to appropriate cell cycle regulation of histone gene expression by recruiting RNA polymerase II to histone genes, and subsequent CDK1- and casein kinase II-dependent eviction from chromatin is required to promote transcriptional elongation. The chain is ATPase histone chaperone YTA7 from Saccharomyces cerevisiae (strain ATCC 204508 / S288c) (Baker's yeast).